Consider the following 49-residue polypeptide: uncharacterized protein (49 aa).

The interval methionine 1–isoleucine 49 is disordered. Basic and acidic residues predominate over residues asparagine 9–glutamate 18.

This is an uncharacterized protein from Dictyostelium discoideum (Social amoeba).